The chain runs to 344 residues: Uroporphyrinogen decarboxylase (344 aa).

Residues 26 to 30, phenylalanine 45, aspartate 75, tyrosine 151, serine 206, and histidine 320 contribute to the substrate site; that span reads RQAGR.

The protein belongs to the uroporphyrinogen decarboxylase family. Homodimer.

It localises to the cytoplasm. It carries out the reaction uroporphyrinogen III + 4 H(+) = coproporphyrinogen III + 4 CO2. It functions in the pathway porphyrin-containing compound metabolism; protoporphyrin-IX biosynthesis; coproporphyrinogen-III from 5-aminolevulinate: step 4/4. Catalyzes the decarboxylation of four acetate groups of uroporphyrinogen-III to yield coproporphyrinogen-III. The protein is Uroporphyrinogen decarboxylase of Staphylococcus haemolyticus (strain JCSC1435).